Here is a 640-residue protein sequence, read N- to C-terminus: EF-hand domain-containing protein 1 (640 aa).

Residues 1–45 (MVSNPVHGLPFLPGTSFKDSTKTAFHRSQTLSYRNGYAIVRRPTV) are required for its localization in the mitotic spindle and interaction with alpha-tubulin. DM10 domains lie at 93–198 (DKKV…ESQG), 239–359 (DKQV…KEKF), and 416–520 (DNKV…ESNA). The interval 535–554 (VRKREAPAPEAESKQTEKDP) is disordered. The segment covering 538-554 (REAPAPEAESKQTEKDP) has biased composition (basic and acidic residues). The EF-hand domain maps to 574–609 (SCKDNIREAFQIYDKEASGYVDRDMFFKICESLNVP).

As to quaternary structure, microtubule inner protein component of sperm flagellar doublet microtubules. Interacts with the C-terminus of CACNA1E. Interacts with alpha-tubulin. Widely expressed. Not detected in lymphocytes.

It localises to the cytoplasm. The protein resides in the cytoskeleton. Its subcellular location is the cilium axoneme. It is found in the flagellum axoneme. The protein localises to the microtubule organizing center. It localises to the centrosome. The protein resides in the spindle. Its subcellular location is the spindle pole. Microtubule inner protein (MIP) part of the dynein-decorated doublet microtubules (DMTs) in cilia axoneme, which is required for motile cilia beating. Microtubule-associated protein which regulates cell division and neuronal migration during cortical development. Necessary for radial and tangential cell migration during brain development, possibly acting as a regulator of cell morphology and process formation during migration. May enhance calcium influx through CACNA1E and stimulate programmed cell death. This is EF-hand domain-containing protein 1 from Homo sapiens (Human).